The following is a 216-amino-acid chain: MRSGCVVVHVWILAGLWLAVAGRPLAFSDAGPHVHYGWGDPIRLRHLYTSGPHGLSSCFLRIRADGVVDCARGQSAHSLLEIKAVALRTVAIKGVHSVRYLCMGADGKMQGLLQYSEEDCAFEEEIRPDGYNVYRSEKHRLPVSLSSAKQRQLYKNRGFLPLSHFLPMLPMVPEEPEDLRGHLESDMFSSPLETDSMDPFGLVTGLEAVRSPSFEK.

The signal sequence occupies residues 1 to 24; it reads MRSGCVVVHVWILAGLWLAVAGRP. 2 disulfides stabilise this stretch: Cys58/Cys70 and Cys102/Cys120.

It belongs to the heparin-binding growth factors family. In terms of assembly, interacts with FGFR1, FGFR2, FGFR3 and FGFR4. Affinity between fibroblast growth factors (FGFs) and their receptors is increased by KL, KLB and heparan sulfate glycosaminoglycans that function as coreceptors. Interacts with KL; this interaction is direct. Interacts with KLB; this interaction is direct. Interacts with FGFR4 in the presence of heparin, KL or KLB. Interacts with MALRD1. Expressed in fetal brain, cartilage, retina, and adult gall bladder.

The protein localises to the secreted. Its function is as follows. Involved in the suppression of bile acid biosynthesis through down-regulation of CYP7A1 expression, following positive regulation of the JNK and ERK1/2 cascades. Stimulates glucose uptake in adipocytes. Activity requires the presence of KLB and FGFR4. This Homo sapiens (Human) protein is Fibroblast growth factor 19 (FGF19).